The primary structure comprises 1059 residues: MAAVAGSGAAAAPSSLLLVVGSEFGSPGLLTYVLEELERGIRSWDVDPGVCNLDEQLKVFVSRHSATFSSIVKGQRSLHHRGDNLETLVLLNPSDKSLYDELRNLLLDPASHKLLVLAGPCLEETGELLLQTGGFSPHHFLQVLKDREIRDILATTPPPVQPPILTITCPTFGDWAQLAPAVPGLQGALRLQLRLNPPAQLPNSEGLCEFLEYVAESLEPPSPFELLEPPTSGGFLRLGRPCCYIFPGGLGDAAFFAVNGFTVLVNGGSNPKSSFWKLVRHLDRVDAVLVTHPGADSLPGLNSLLRRKLAERSEVAAGGGSWDDRLRRLISPNLGVVFFNACEAASRLARGEDEAELALSLLAQLGITPLPLSRGPVPAKPTVLFEKMGVGRLDMYVLHPPSAGAERTLASVCALLVWHPAGPGEKVVRVLFPGCTPPACLLDGLVRLQHLRFLREPVVTPQDLEGPGRAESKESVGSRDSSKREGLLATHPRPGQERPGVARKEPARAEAPRKTEKEAKTPRELKKDPKPSVSRTQPREVRRAASSVPNLKKTNAQAAPKPRKAPSTSHSGFPPVANGPRSPPSLRCGEASPPSAACGSPASQLVATPSLELGPIPAGEEKALELPLAASSIPRPRTPSPESHRSPAEGSERLSLSPLRGGEAGPDASPTVTTPTVTTPSLPAEVGSPHSTEVDESLSVSFEQVLPPSAPTSEAGLSLPLRGPRARRSASPHDVDLCLVSPCEFEHRKAVPMAPAPASPGSSNDSSARSQERAGGLGAEETPPTSVSESLPTLSDSDPVPLAPGAADSDEDTEGFGVPRHDPLPDPLKVPPPLPDPSSICMVDPEMLPPKTARQTENVSRTRKPLARPNSRAAAPKATPVAAAKTKGLAGGDRASRPLSARSEPSEKGGRAPLSRKSSTPKTATRGPSGSASSRPGVSATPPKSPVYLDLAYLPSGSSAHLVDEEFFQRVRALCYVISGQDQRKEEGMRAVLDALLASKQHWDRDLQVTLIPTFDSVAMHTWYAETHARHQALGITVLGSNSMVSMQDDAFPACKVEF.

Residues 1–797 (MAAVAGSGAA…SESLPTLSDS (797 aa)) are necessary for the microtubule-organizing center localization. Residues serine 321 and serine 472 each carry the phosphoserine modification. Disordered stretches follow at residues 461-733 (PQDL…ASPH) and 751-942 (VPMA…SATP). Basic and acidic residues-rich tracts occupy residues 466–486 (GPGR…KREG) and 494–530 (PGQE…KDPK). A compositionally biased stretch (polar residues) spans 547-557 (SVPNLKKTNAQ). A Phosphoserine modification is found at serine 582. The segment covering 591–603 (ASPPSAACGSPAS) has biased composition (low complexity). Position 638 is a phosphothreonine (threonine 638). Serine 640 carries the post-translational modification Phosphoserine. Over residues 642–652 (ESHRSPAEGSE) the composition is skewed to basic and acidic residues. Phosphoserine is present on residues serine 655 and serine 657. Residues 666–1059 (PDASPTVTTP…DAFPACKVEF (394 aa)) are necessary for interaction with RASSF1 isoform A and isoform C. Over residues 670–680 (PTVTTPTVTTP) the composition is skewed to low complexity. The interval 714 to 966 (EAGLSLPLRG…GSSAHLVDEE (253 aa)) is necessary for association with microtubules. Serine 731 and serine 759 each carry phosphoserine. The span at 759–769 (SPGSSNDSSAR) shows a compositional bias: low complexity. Positions 783–796 (PPTSVSESLPTLSD) are enriched in polar residues. Serine 809 carries the post-translational modification Phosphoserine. Residues 825–836 (PDPLKVPPPLPD) are compositionally biased toward pro residues. Composition is skewed to low complexity over residues 873–887 (AAAP…AKTK) and 923–936 (TATR…SSRP). Residues 960 to 1059 (AHLVDEEFFQ…DAFPACKVEF (100 aa)) are necessary for association with actin. The necessary for the mitochondrial aggregation and genome destruction stretch occupies residues 967 to 991 (FFQRVRALCYVISGQDQRKEEGMRA).

Belongs to the MAP1 family. As to quaternary structure, heterodimer of a heavy and a light chain. Interacts with microtubules and actin. Both MAP1S heavy and light chains interact with microtubules. MAP1S light chain interacts with actin. Interacts (via C-terminus) with GAN (via Kelch domains). Interacts with ESR1, LRPPRC, RASSF1 isoform A and isoform C, microtubules and VCY2. Interacts with WDR47 (via N-terminus of light chain). In terms of tissue distribution, expressed in neurons (at protein level). Expressed in spermatocytes, spermatids and spermatozoa. Expressed in the cerebral cortex. Highly expressed in testis. Moderately expressed in the brain, colon, heart, kidney, liver, lung, placenta, small intestine, spleen and stomach. Weakly expressed in muscle.

It localises to the nucleus. The protein localises to the cytoplasm. The protein resides in the cytosol. Its subcellular location is the cytoskeleton. It is found in the spindle. In terms of biological role, microtubule-associated protein that mediates aggregation of mitochondria resulting in cell death and genomic destruction (MAGD). Plays a role in anchoring the microtubule organizing center to the centrosomes. Binds to DNA. Plays a role in apoptosis. Involved in the formation of microtubule bundles. The polypeptide is Microtubule-associated protein 1S (MAP1S) (Homo sapiens (Human)).